The chain runs to 511 residues: Vesicular acetylcholine transporter (511 aa).

The Cytoplasmic portion of the chain corresponds to 1–36; sequence MAVGQAKAAMGKISSAIGERSKRISGAMNEPRRKRK. The helical transmembrane segment at 37–57 threads the bilayer; that stretch reads ILLVIVCIAMLLDNMLYMVIV. Topologically, residues 58–108 are lumenal, vesicle; sequence PIIPNYLETIRTYKLVYITTPSNGTNGSLLNSTQRAVLERNPNANEDIQIG. N-linked (GlcNAc...) asparagine glycosylation is found at asparagine 80, asparagine 83, and asparagine 88. Residues 109-129 traverse the membrane as a helical segment; the sequence is VLFASKAILQLLSNPFTGTFI. The Cytoplasmic portion of the chain corresponds to 130–135; it reads DRVGYD. The helical transmembrane segment at 136 to 156 threads the bilayer; it reads IPLLIGLTIMFFSTITFAFGE. The Lumenal, vesicle portion of the chain corresponds to 157–165; that stretch reads SYAILFAAR. A helical transmembrane segment spans residues 166–186; that stretch reads SLQGLGSAFADTSGIAMIADK. Residues 187-197 are Cytoplasmic-facing; that stretch reads YTEESERTQAL. A helical transmembrane segment spans residues 198-218; the sequence is GIALAFISFGSLVAPPFGGVL. Over 219 to 225 the chain is Lumenal, vesicle; sequence YQFAGKW. Residues 226–246 traverse the membrane as a helical segment; that stretch reads VPFLVLSFVCLLDGILLLMVV. The Cytoplasmic segment spans residues 247-267; it reads TPFASRTRVNTLQGTPIYKLM. Residues 268-288 traverse the membrane as a helical segment; sequence IDPYIAVVAGALTTCNIPLAF. Residues 289-306 lie on the Lumenal, vesicle side of the membrane; that stretch reads LEPTISNWMKKTMNASEW. Asparagine 302 is a glycosylation site (N-linked (GlcNAc...) asparagine). The helical transmembrane segment at 307–327 threads the bilayer; the sequence is QMGITWLPAFFPHILGVYITV. Residues 328–337 are Cytoplasmic-facing; it reads KLAAKYPNYQ. The helical transmembrane segment at 338 to 358 threads the bilayer; that stretch reads WLYGAVGLVIIGASSCTIPAC. The Lumenal, vesicle portion of the chain corresponds to 359 to 363; the sequence is RNFEE. A helical membrane pass occupies residues 364–384; the sequence is LIIPLCALCFGIALVDTALLP. Over 385–400 the chain is Cytoplasmic; that stretch reads TLAFLVDIRYVSVYGS. The chain crosses the membrane as a helical span at residues 401–421; it reads VYAIADISYSVAYALGPIMAG. Over 422-428 the chain is Lumenal, vesicle; the sequence is QIVHDLG. Residues 429–449 form a helical membrane-spanning segment; sequence FVQLNLGMGLVNILYAPGLLF. Topologically, residues 450-511 are cytoplasmic; sequence LRNVCQMKPS…VLSDQEGYSE (62 aa). The disordered stretch occupies residues 485–511; it reads EAKEPHGTSSGNHSVHAVLSDQEGYSE.

The protein belongs to the major facilitator superfamily. Vesicular transporter family. As to expression, high expression in the electric lobe of the brain.

It is found in the membrane. Involved in acetylcholine transport into synaptic vesicles. The polypeptide is Vesicular acetylcholine transporter (Torpedo marmorata (Marbled electric ray)).